Consider the following 250-residue polypeptide: MANRLAGKVALITGGASGLGAAQAKRFAEEGAKVVIGDLNEEMAKGVVAEIRAAGGDALFIRLDVTDAASWNNAIAAAVEAFGGLTTLSNTAGIIHPGGFEEESIEGWNKMVAVNQTAIFLGIKAAIPELVKSGNGSIINISSLIGMFPTAGNASYCATKAAVRIMSKAAALEFVDRGVRVNTIVPGGMNTPITANVPPDVLKQQTSQIPMGKLGDPIDIANGALFLASDEAKYITGVDLPIDGGWSVGV.

Residues Asp-38, Asp-64, Val-65, Tyr-156, Lys-160, Thr-191, and Thr-194 each coordinate NAD(+). The Proton acceptor role is filled by Tyr-156.

It belongs to the short-chain dehydrogenases/reductases (SDR) family.

It carries out the reaction 2,5-dichlorocyclohexa-2,5-dien-1,4-diol + NAD(+) = 2,5-dichlorohydroquinone + NADH + H(+). In terms of biological role, catalyzes the degradation of 2,5-dichloro-2,5-cyclohexadiene-1,4-diol (2,5-DDOL) into 2,5-dichlorohydroquinone (2,5-DCHQ) in vitro. LinX appears not to be involved in gamma-hexachlorocyclohexane (gamma-HCH) degradation pathway, in contrast to LinC which has the same enzymatic activity. This chain is 2,5-dichloro-2,5-cyclohexadiene-1,4-diol dehydrogenase LinX, found in Sphingobium indicum (strain DSM 16412 / CCM 7286 / MTCC 6364 / B90A).